The primary structure comprises 258 residues: UPF0246 protein CKO_03380 (258 aa).

Belongs to the UPF0246 family.

In Citrobacter koseri (strain ATCC BAA-895 / CDC 4225-83 / SGSC4696), this protein is UPF0246 protein CKO_03380.